We begin with the raw amino-acid sequence, 314 residues long: MGIGRSEGGRRGAALGVLLALGAALLAVGSASEYDYVSFQSDIGPYQSGRFYTKPPQCVDIPADLRLCHNVGYKKMVLPNLLEHETMAEVKQQASSWVPLLNKNCHAGTQVFLCSLFAPVCLDRPIYPCRWLCEAVRDSCEPVMQFFGFYWPEMLKCDKFPEGDVCIAMTPPNATEASKPQGTTVCPPCDNELKSEAIIEHLCASEFALRMKIKEVKKENGDKKIVPKKKKPLKLGPIKKKDLKKLVLYLKNGADCPCHQLDNLSHHFLIMGRKVKSQYLLTAIHKWDKKNKEFKNFMKKMKNHECPTFQSVFK.

Positions 1-31 are cleaved as a signal peptide; it reads MGIGRSEGGRRGAALGVLLALGAALLAVGSA. Residues 53–169 enclose the FZ domain; that stretch reads TKPPQCVDIP…FPEGDVCIAM (117 aa). 5 disulfide bridges follow: Cys-58–Cys-121, Cys-68–Cys-114, Cys-105–Cys-140, Cys-129–Cys-166, and Cys-133–Cys-157. The N-linked (GlcNAc...) asparagine glycan is linked to Asn-173. Cystine bridges form between Cys-186–Cys-256, Cys-189–Cys-258, and Cys-203–Cys-306. The NTR domain occupies 186 to 306; it reads CPPCDNELKS…FMKKMKNHEC (121 aa).

It belongs to the secreted frizzled-related protein (sFRP) family. Interacts with WNT1, WNT2 and FRZD6. Interacts with WNT4, WNT8 and MYOC. Widely expressed. Absent from lung, liver and peripheral blood leukocytes. Highest levels in heart and fetal kidney. Also expressed in testis, ovary, fetal brain and lung, leiomyomal cells, myometrial cells and vascular smooth muscle cells. Expressed in foreskin fibroblasts and in keratinocytes.

The protein localises to the secreted. Its function is as follows. Soluble frizzled-related proteins (sFRPS) function as modulators of Wnt signaling through direct interaction with Wnts. They have a role in regulating cell growth and differentiation in specific cell types. SFRP1 decreases intracellular beta-catenin levels. Has antiproliferative effects on vascular cells, in vitro and in vivo, and can induce, in vivo, an angiogenic response. In vascular cell cycle, delays the G1 phase and entry into the S phase. In kidney development, inhibits tubule formation and bud growth in metanephroi. Inhibits WNT1/WNT4-mediated TCF-dependent transcription. This Homo sapiens (Human) protein is Secreted frizzled-related protein 1 (SFRP1).